The primary structure comprises 251 residues: Ubiquinone/menaquinone biosynthesis C-methyltransferase UbiE (251 aa).

The S-adenosyl-L-methionine site is built by threonine 74, aspartate 92, and serine 132.

It belongs to the class I-like SAM-binding methyltransferase superfamily. MenG/UbiE family.

The enzyme catalyses a 2-demethylmenaquinol + S-adenosyl-L-methionine = a menaquinol + S-adenosyl-L-homocysteine + H(+). It carries out the reaction a 2-methoxy-6-(all-trans-polyprenyl)benzene-1,4-diol + S-adenosyl-L-methionine = a 5-methoxy-2-methyl-3-(all-trans-polyprenyl)benzene-1,4-diol + S-adenosyl-L-homocysteine + H(+). It functions in the pathway quinol/quinone metabolism; menaquinone biosynthesis; menaquinol from 1,4-dihydroxy-2-naphthoate: step 2/2. Its pathway is cofactor biosynthesis; ubiquinone biosynthesis. Functionally, methyltransferase required for the conversion of demethylmenaquinol (DMKH2) to menaquinol (MKH2) and the conversion of 2-polyprenyl-6-methoxy-1,4-benzoquinol (DDMQH2) to 2-polyprenyl-3-methyl-6-methoxy-1,4-benzoquinol (DMQH2). This is Ubiquinone/menaquinone biosynthesis C-methyltransferase UbiE from Rubrivivax gelatinosus (strain NBRC 100245 / IL144).